The sequence spans 205 residues: Cytochrome c biogenesis ATP-binding export protein CcmA (205 aa).

Positions 2-204 constitute an ABC transporter domain; that stretch reads LEVSNLTAIR…SPKLRKIKLG (203 aa). Residue 34-41 participates in ATP binding; it reads GRNGTGKT.

Belongs to the ABC transporter superfamily. CcmA exporter (TC 3.A.1.107) family. As to quaternary structure, the complex is composed of two ATP-binding proteins (CcmA) and two transmembrane proteins (CcmB).

The protein localises to the cell inner membrane. It carries out the reaction heme b(in) + ATP + H2O = heme b(out) + ADP + phosphate + H(+). Part of the ABC transporter complex CcmAB involved in the biogenesis of c-type cytochromes; once thought to export heme, this seems not to be the case, but its exact role is uncertain. Responsible for energy coupling to the transport system. This is Cytochrome c biogenesis ATP-binding export protein CcmA from Vibrio vulnificus (strain CMCP6).